A 471-amino-acid polypeptide reads, in one-letter code: Proton-coupled amino acid transporter-like protein pathetic (471 aa).

N61 carries an N-linked (GlcNAc...) asparagine glycan. 10 consecutive transmembrane segments (helical) span residues 81–101 (FAFMCSGLIMGIFSTIFTAFI), 153–173 (ILFGLFLTYFGTCSVYTVIVA), 187–207 (AVSLRMLICIMLVPLILIAWV), 216–236 (VSMVANVFMGLGLGITFYYLV), 253–273 (LPQFFSITIFAMEAIGVVMPL), 283–303 (FLGICGVLSQGMSGVTLIYML), 337–357 (LISLAVYCTFGLQFFVCLEII), 375–395 (VLRTVLVTAAVVLAVAVPTIG), 397–417 (FMGLIGAFCFSILGLIFPVVI), and 432–452 (WILWKNAIITLCGIGALVFGT).

The protein belongs to the amino acid/polyamine transporter 2 family. As to expression, in third instar larvae, expressed at highest levels in the brain and digestive system with particularly high levels in surface glia of the brain (at protein level). In third instar larvae, expressed in all cells of the body wall (at protein level). Within the body wall of third instar larvae, most highly expressed in epithelial cells and sensory neurons. Expressed at a similar level in all da neurons (at protein level). Widely expressed during embryonic and late larval stages. Levels are highly dynamic in embryogenesis with surges of expression in many structures, including muscle primordia, salivary glands, proventriculus, trachea and gonads. Expressed in all or most cells of larval imaginal disks. Expression is also particularly strong in the pouch and hinge regions of the wing disk and in the morphogenetic furrow of the eye disk.

The protein localises to the cell membrane. The protein resides in the lysosome membrane. Its subcellular location is the late endosome membrane. It is found in the cell projection. It localises to the axon. The protein localises to the dendrite. The protein resides in the perikaryon. Its subcellular location is the cytoplasm. Its function is as follows. Amino acid transporter which has pH-dependent electrogenic transport activity for alanine and glycine but not for proline. Plays a role in positive regulation of growth by directly or indirectly modulating the effects of the TOR signaling pathway. Required in a cell-autonomous manner for dendrite growth in neurons with large dendrite arbors. The sequence is that of Proton-coupled amino acid transporter-like protein pathetic from Drosophila melanogaster (Fruit fly).